An 896-amino-acid chain; its full sequence is Protein translocase subunit SecA (896 aa).

Residues glutamine 87, 105–109, and aspartate 512 contribute to the ATP site; that span reads GEGKT. Residues 858–886 form a disordered region; the sequence is RAGGEAEAAKPVVRDEKKVGRNDPCPCGS. Residues 869 to 878 show a composition bias toward basic and acidic residues; that stretch reads VVRDEKKVGR. Residues cysteine 882, cysteine 884, cysteine 893, and cysteine 894 each contribute to the Zn(2+) site.

The protein belongs to the SecA family. In terms of assembly, monomer and homodimer. Part of the essential Sec protein translocation apparatus which comprises SecA, SecYEG and auxiliary proteins SecDF-YajC and YidC. Zn(2+) is required as a cofactor.

It localises to the cell inner membrane. It is found in the cytoplasm. It carries out the reaction ATP + H2O + cellular proteinSide 1 = ADP + phosphate + cellular proteinSide 2.. In terms of biological role, part of the Sec protein translocase complex. Interacts with the SecYEG preprotein conducting channel. Has a central role in coupling the hydrolysis of ATP to the transfer of proteins into and across the cell membrane, serving as an ATP-driven molecular motor driving the stepwise translocation of polypeptide chains across the membrane. The polypeptide is Protein translocase subunit SecA (Syntrophotalea carbinolica (strain DSM 2380 / NBRC 103641 / GraBd1) (Pelobacter carbinolicus)).